A 114-amino-acid polypeptide reads, in one-letter code: MMKYLAAYLLSTMSGNKSPSAKDIEDVLGSVGLDVDMEDANKVVSALSGKSIDEVITAGLAKVSSVPSDAAVSAIAPVVSATPTDALQAGSKKGETKEGPKEESDEDMGFGLFD.

The interval 84-114 (TDALQAGSKKGETKEGPKEESDEDMGFGLFD) is disordered. A compositionally biased stretch (basic and acidic residues) spans 92–102 (KKGETKEGPKE).

Belongs to the eukaryotic ribosomal protein P1/P2 family. P1 and P2 exist as dimers at the large ribosomal subunit. Phosphorylated.

Its function is as follows. Plays an important role in the elongation step of protein synthesis. The protein is Large ribosomal subunit protein P2 (rpp-2) of Brugia malayi (Filarial nematode worm).